The primary structure comprises 444 residues: Tubulin gamma chain (444 aa).

Position 144-150 (144-150) interacts with GTP; sequence SGGTGSG.

This sequence belongs to the tubulin family.

The protein localises to the cytoplasm. It is found in the cytoskeleton. It localises to the microtubule organizing center. Its subcellular location is the centrosome. The protein resides in the cell junction. The protein localises to the hemidesmosome. It is found in the adherens junction. In terms of biological role, tubulin is the major constituent of microtubules. The gamma chain is found at microtubule organizing centers (MTOC) such as the spindle poles or the centrosome, suggesting that it is involved in the minus-end nucleation of microtubule assembly. The chain is Tubulin gamma chain (tbg-1) from Caenorhabditis elegans.